Consider the following 1776-residue polypeptide: Signal-induced proliferation-associated 1-like protein 3 (1776 aa).

Disordered regions lie at residues 41–157 (AQNG…GRAF) and 240–325 (PGAL…EASR). The span at 54 to 69 (PAATTTRPSPTTPAMP) shows a compositional bias: low complexity. Composition is skewed to polar residues over residues 89–99 (EQSNPSPSQDT) and 112–129 (RNLQNGQLPSSTPASSGS). A Phosphoserine modification is found at S94. Residues 131-140 (AFHRLSRRRS) show a composition bias toward basic residues. Residue S140 is modified to Phosphoserine. Positions 257-268 (GQPTKDSLQSLQ) are enriched in polar residues. The residue at position 394 (S394) is a Phosphoserine. The disordered stretch occupies residues 438 to 461 (SRASVGSPGGSSEAHMAEPTLSTH). Positions 605-822 (LLKLDEQGLC…RTRQEYLKDL (218 aa)) constitute a Rap-GAP domain. One can recognise a PDZ domain in the interval 960 to 1024 (DMTLRRNGLG…DQMIDLLRTS (65 aa)). Disordered regions lie at residues 1040–1104 (PRRG…AQSL), 1117–1164 (RESQ…ATYA), and 1184–1632 (DPHF…LDPG). Polar residues-rich tracts occupy residues 1074 to 1104 (APWQWSGPASHNSLPATKWTTPATPGHAQSL) and 1151 to 1160 (PSGSFSTPGS). The segment covering 1190-1201 (DGMSSGDSSSGG) has biased composition (low complexity). Positions 1239-1255 (SRQDAAGKDSPNRHSKG) are enriched in basic and acidic residues. Low complexity predominate over residues 1260 to 1275 (SSHSSSNTLSSNASSS). Positions 1298-1316 (GGSSDSGIDTTLYTSSPSC) are enriched in polar residues. Basic and acidic residues predominate over residues 1344–1357 (SAGRPHPVDRRREV). S1358 carries the phosphoserine modification. Phosphothreonine is present on T1381. Over residues 1409-1436 (VYKTASAETPRPSQLSQCSPFQLSTSVP) the composition is skewed to polar residues. K1442 bears the N6-acetyllysine mark. Residues 1503–1512 (TIEDDLKKLI) show a composition bias toward basic and acidic residues. Composition is skewed to polar residues over residues 1526–1541 (GQSPQKSLQRTLSDES) and 1566–1578 (LFTSTCTFPSSTL). S1538 and S1541 each carry phosphoserine. A compositionally biased stretch (low complexity) spans 1589 to 1601 (PPSGAPSTTPATG). S1614 and S1617 each carry phosphoserine. Residues 1620 to 1630 (DGRDRPLRRLD) show a composition bias toward basic and acidic residues. S1672 carries the phosphoserine modification. Positions 1678–1705 (AHSPVHSHLSLERGPQTPRATPTMSEES) are disordered. Phosphothreonine is present on residues T1694 and T1698. Residues 1715-1769 (QLEVMLKQLHTDLQKEKQDKVVLQSEVASLRQNNQRLQEESQAASEQLRKFAELF) adopt a coiled-coil conformation.

It is found in the apical cell membrane. Functionally, plays a critical role in epithelial cell morphogenesis, polarity, adhesion and cytoskeletal organization in the lens. This chain is Signal-induced proliferation-associated 1-like protein 3 (Sipa1l3), found in Mus musculus (Mouse).